We begin with the raw amino-acid sequence, 172 residues long: Acidic proline-rich protein PRP25 (172 aa).

Positions Met-1–Ala-16 are cleaved as a signal peptide. Positions Glu-22–Pro-172 are disordered. Over residues Gln-32–Pro-44 the composition is skewed to pro residues. Residues Gly-57–Lys-67 are compositionally biased toward low complexity. Pro residues-rich tracts occupy residues Pro-68–Lys-137 and Gln-145–Pro-172.

It localises to the secreted. The protein is Acidic proline-rich protein PRP25 of Rattus norvegicus (Rat).